We begin with the raw amino-acid sequence, 610 residues long: UvrABC system protein C (610 aa).

Residues 16-94 (SQPGVYRMYD…IKLYQPRYNV (79 aa)) form the GIY-YIG domain. The 36-residue stretch at 204-239 (DQVLTQLISRMETASQNLEFEEAARIRDQIQAVRRV) folds into the UVR domain.

This sequence belongs to the UvrC family. As to quaternary structure, interacts with UvrB in an incision complex.

The protein localises to the cytoplasm. Its function is as follows. The UvrABC repair system catalyzes the recognition and processing of DNA lesions. UvrC both incises the 5' and 3' sides of the lesion. The N-terminal half is responsible for the 3' incision and the C-terminal half is responsible for the 5' incision. The protein is UvrABC system protein C of Escherichia coli O139:H28 (strain E24377A / ETEC).